The sequence spans 644 residues: Threonine--tRNA ligase (644 aa).

In terms of domain architecture, TGS spans 1 to 61 (MKVSIEGSVV…TACETLEPVY (61 aa)). Positions 241–532 (DHRKLGTQLD…LTEHFAGAFP (292 aa)) are catalytic. Zn(2+)-binding residues include Cys-333, His-384, and His-509.

Belongs to the class-II aminoacyl-tRNA synthetase family. Homodimer. Zn(2+) serves as cofactor.

The protein resides in the cytoplasm. It carries out the reaction tRNA(Thr) + L-threonine + ATP = L-threonyl-tRNA(Thr) + AMP + diphosphate + H(+). Its function is as follows. Catalyzes the attachment of threonine to tRNA(Thr) in a two-step reaction: L-threonine is first activated by ATP to form Thr-AMP and then transferred to the acceptor end of tRNA(Thr). Also edits incorrectly charged L-seryl-tRNA(Thr). This is Threonine--tRNA ligase from Oleidesulfovibrio alaskensis (strain ATCC BAA-1058 / DSM 17464 / G20) (Desulfovibrio alaskensis).